A 320-amino-acid chain; its full sequence is ATP-dependent 6-phosphofructokinase (320 aa).

An ATP-binding site is contributed by Gly12. ADP is bound by residues 22–26 (RGVVR) and 55–60 (RYSVSD). Residues 73–74 (RF) and 103–106 (GDGS) each bind ATP. Asp104 provides a ligand contact to Mg(2+). 126–128 (TID) contacts substrate. Asp128 functions as the Proton acceptor in the catalytic mechanism. Arg155 lines the ADP pocket. Residues Arg163 and 170 to 172 (MGR) each bind substrate. ADP-binding positions include 186–188 (GCE), Lys212, and 214–216 (KKH). Substrate-binding positions include Glu223, Arg244, and 250 to 253 (HIQR).

The protein belongs to the phosphofructokinase type A (PFKA) family. ATP-dependent PFK group I subfamily. Prokaryotic clade 'B1' sub-subfamily. As to quaternary structure, homotetramer. Mg(2+) is required as a cofactor.

Its subcellular location is the cytoplasm. It carries out the reaction beta-D-fructose 6-phosphate + ATP = beta-D-fructose 1,6-bisphosphate + ADP + H(+). It functions in the pathway carbohydrate degradation; glycolysis; D-glyceraldehyde 3-phosphate and glycerone phosphate from D-glucose: step 3/4. Allosterically activated by ADP and other diphosphonucleosides, and allosterically inhibited by phosphoenolpyruvate. In terms of biological role, catalyzes the phosphorylation of D-fructose 6-phosphate to fructose 1,6-bisphosphate by ATP, the first committing step of glycolysis. The protein is ATP-dependent 6-phosphofructokinase of Klebsiella pneumoniae (strain 342).